A 146-amino-acid polypeptide reads, in one-letter code: Hemoglobin cathodic subunit beta (146 aa).

A Globin domain is found at 2–146 (QWSSSERSVI…VVSGLSKQYF (145 aa)). Histidine 63 lines the heme b pocket.

In terms of assembly, heterotetramer of two alpha and two beta chains. In terms of tissue distribution, red blood cells.

In terms of biological role, involved in oxygen transport from the gills to various peripheral tissues. This is Hemoglobin cathodic subunit beta from Ophisurus serpens (Serpent eel).